Consider the following 685-residue polypeptide: Polyphosphate kinase (685 aa).

Asparagine 45 serves as a coordination point for ATP. Arginine 375 and arginine 405 together coordinate Mg(2+). The Phosphohistidine intermediate role is filled by histidine 435. Residues tyrosine 468, arginine 564, and histidine 592 each coordinate ATP.

This sequence belongs to the polyphosphate kinase 1 (PPK1) family. It depends on Mg(2+) as a cofactor. An intermediate of this reaction is the autophosphorylated ppk in which a phosphate is covalently linked to a histidine residue through a N-P bond.

The catalysed reaction is [phosphate](n) + ATP = [phosphate](n+1) + ADP. In terms of biological role, catalyzes the reversible transfer of the terminal phosphate of ATP to form a long-chain polyphosphate (polyP). This is Polyphosphate kinase from Neisseria meningitidis serogroup B (strain ATCC BAA-335 / MC58).